A 476-amino-acid chain; its full sequence is Bifunctional protein GlmU (476 aa).

The segment at 1 to 232 (MGDLAAIILA…PVEVMGVNDR (232 aa)) is pyrophosphorylase. UDP-N-acetyl-alpha-D-glucosamine-binding positions include 9–12 (LAAG), Lys23, Gln75, and 80–81 (GT). Mg(2+) is bound at residue Asp105. UDP-N-acetyl-alpha-D-glucosamine-binding residues include Gly142, Glu157, Asn172, and Asn230. Asn230 is a binding site for Mg(2+). The linker stretch occupies residues 233–253 (AQLAEAGRFARQRINRELMLD). Residues 254–476 (GVTIVDPAAT…DGWKLKQRDQ (223 aa)) form an N-acetyltransferase region. UDP-N-acetyl-alpha-D-glucosamine is bound by residues Arg353 and Lys371. Catalysis depends on His383, which acts as the Proton acceptor. Residues Tyr386 and Asn397 each contribute to the UDP-N-acetyl-alpha-D-glucosamine site. Acetyl-CoA is bound by residues 406–407 (NY), Ser425, Ala443, and Arg460.

In the N-terminal section; belongs to the N-acetylglucosamine-1-phosphate uridyltransferase family. This sequence in the C-terminal section; belongs to the transferase hexapeptide repeat family. As to quaternary structure, homotrimer. The cofactor is Mg(2+).

Its subcellular location is the cytoplasm. It carries out the reaction alpha-D-glucosamine 1-phosphate + acetyl-CoA = N-acetyl-alpha-D-glucosamine 1-phosphate + CoA + H(+). The enzyme catalyses N-acetyl-alpha-D-glucosamine 1-phosphate + UTP + H(+) = UDP-N-acetyl-alpha-D-glucosamine + diphosphate. It functions in the pathway nucleotide-sugar biosynthesis; UDP-N-acetyl-alpha-D-glucosamine biosynthesis; N-acetyl-alpha-D-glucosamine 1-phosphate from alpha-D-glucosamine 6-phosphate (route II): step 2/2. It participates in nucleotide-sugar biosynthesis; UDP-N-acetyl-alpha-D-glucosamine biosynthesis; UDP-N-acetyl-alpha-D-glucosamine from N-acetyl-alpha-D-glucosamine 1-phosphate: step 1/1. The protein operates within bacterial outer membrane biogenesis; LPS lipid A biosynthesis. In terms of biological role, catalyzes the last two sequential reactions in the de novo biosynthetic pathway for UDP-N-acetylglucosamine (UDP-GlcNAc). The C-terminal domain catalyzes the transfer of acetyl group from acetyl coenzyme A to glucosamine-1-phosphate (GlcN-1-P) to produce N-acetylglucosamine-1-phosphate (GlcNAc-1-P), which is converted into UDP-GlcNAc by the transfer of uridine 5-monophosphate (from uridine 5-triphosphate), a reaction catalyzed by the N-terminal domain. In Geobacter metallireducens (strain ATCC 53774 / DSM 7210 / GS-15), this protein is Bifunctional protein GlmU.